The primary structure comprises 708 residues: Vertnin (708 aa).

Disordered regions lie at residues 473 to 499 (PWKG…FLPP) and 561 to 636 (APAL…PVAE). The segment covering 568-582 (GLREAKEKQEKEAGR) has biased composition (basic and acidic residues).

Belongs to the vertnin family.

The sequence is that of Vertnin (VRTN) from Ailuropoda melanoleuca (Giant panda).